Here is a 774-residue protein sequence, read N- to C-terminus: E3 ubiquitin-protein ligase RFWD3 (774 aa).

Disordered regions lie at residues 32 to 126 (GTIE…TAGA) and 203 to 281 (PYPL…SAME). A phosphoserine; by ATM and ATR mark is found at serine 59 and serine 75. Acidic residues predominate over residues 92 to 103 (LTEEVQPSEENM). The span at 108 to 121 (PGTSEEPSQGSGAN) shows a compositional bias: polar residues. The span at 223–242 (SDSDGSAEDEEVVVQAEEPE) shows a compositional bias: acidic residues. The RING-type; degenerate zinc finger occupies 288–332 (CTICLEQWTNAGDHRISALRCGHLFGFRCISKWLKGQTRKCPQCN). The stretch at 358–403 (RMKSDLLNEQMLRKQAELESAQCRLQLQVLIDKCTKLNSRVQDLEK) forms a coiled coil. WD repeat units follow at residues 493 to 535 (IPMH…VVQT), 536 to 568 (YNTG…LIYD), and 583 to 628 (KARC…SHKP).

Interacts with MDM2 and p53/TP53. Binds to the RPA complex via direct interaction with RPA2. Interacts with RAD51. Post-translationally, phosphorylated at Ser-59 and Ser-75 upon DNA damage by ATM or ATR. ATM phosphorylation occurs at early times upon DNA damage, while ATR is the major kinase at later times. Phosphorylation by ATM and ATR is required to stabilize p53/TP53. Part of the phosphorylation depends upon RPA2 presence.

It localises to the nucleus. Its subcellular location is the PML body. It is found in the cytoplasm. It carries out the reaction S-ubiquitinyl-[E2 ubiquitin-conjugating enzyme]-L-cysteine + [acceptor protein]-L-lysine = [E2 ubiquitin-conjugating enzyme]-L-cysteine + N(6)-ubiquitinyl-[acceptor protein]-L-lysine.. It functions in the pathway protein modification; protein ubiquitination. E3 ubiquitin-protein ligase required for the repair of DNA interstrand cross-links (ICL) in response to DNA damage. Plays a key role in RPA-mediated DNA damage signaling and repair. Acts by mediating ubiquitination of the RPA complex (RPA1, RPA2 and RPA3 subunits) and RAD51 at stalled replication forks, leading to remove them from DNA damage sites and promote homologous recombination. Also mediates the ubiquitination of p53/TP53 in the late response to DNA damage, and acts as a positive regulator of p53/TP53 stability, thereby regulating the G1/S DNA damage checkpoint. May act by catalyzing the formation of short polyubiquitin chains on p53/TP53 that are not targeted to the proteasome. In response to ionizing radiation, interacts with MDM2 and enhances p53/TP53 ubiquitination, possibly by restricting MDM2 from extending polyubiquitin chains on ubiquitinated p53/TP53. Required to translesion DNA synthesis across DNA-protein cross-link adducts by catalyzing ubiquitination of proteins on single-stranded DNA (ssDNA). The sequence is that of E3 ubiquitin-protein ligase RFWD3 (Rfwd3) from Mus musculus (Mouse).